We begin with the raw amino-acid sequence, 241 residues long: Folate receptor alpha (241 aa).

A signal peptide spans 1-19; the sequence is MAWQMTQLLLLALVAAAWG. Cystine bridges form between cysteine 36–cysteine 64, cysteine 56–cysteine 104, cysteine 65–cysteine 108, cysteine 88–cysteine 174, cysteine 95–cysteine 145, cysteine 134–cysteine 208, cysteine 138–cysteine 188, and cysteine 151–cysteine 168. Residue asparagine 68 is glycosylated (N-linked (GlcNAc...) asparagine). Folate contacts are provided by residues aspartate 102, tyrosine 106, 123-127, 156-161, and serine 195; these read WRKER and HKGWNW. Residue asparagine 160 is glycosylated (N-linked (GlcNAc...) asparagine). Serine 234 carries the GPI-anchor amidated serine lipid modification. Residues 235–241 constitute a propeptide, removed in mature form; that stretch reads GSTPQGI.

It belongs to the folate receptor family. The secreted form is derived from the membrane-bound form either by cleavage of the GPI anchor, or/and by proteolysis catalyzed by a metalloprotease. As to expression, detected in milk (at protein level).

The protein localises to the cell membrane. Its subcellular location is the apical cell membrane. The protein resides in the basolateral cell membrane. It is found in the secreted. It localises to the cytoplasmic vesicle. The protein localises to the clathrin-coated vesicle. Its subcellular location is the endosome. Its function is as follows. Binds to folate and reduced folic acid derivatives and mediates delivery of 5-methyltetrahydrofolate and folate analogs into the interior of cells. Has high affinity for folate and folic acid analogs at neutral pH. Exposure to slightly acidic pH after receptor endocytosis triggers a conformation change that strongly reduces its affinity for folates and mediates their release. Required for normal embryonic development and normal cell proliferation. In Bos taurus (Bovine), this protein is Folate receptor alpha (FOLR1).